We begin with the raw amino-acid sequence, 154 residues long: MGLSDQEWQQVLTIWGKVEADLAGHGHAVLMRLFQDHPETLDRFEKFKGLKTPDQMKGSEDLKKHGVTVLTQLGKILKQKGNHEAELKPLAQTHATKHKIPVKYLEFISEVIIKVIAEKHSADFGADSQAAMKKALELFRNDMASKYKEFGFQG.

In terms of domain architecture, Globin spans 2–148 (GLSDQEWQQV…FRNDMASKYK (147 aa)). H65 serves as a coordination point for nitrite. H65 provides a ligand contact to O2. Position 94 (H94) interacts with heme b.

It belongs to the globin family. As to quaternary structure, monomeric.

It is found in the cytoplasm. The protein resides in the sarcoplasm. The catalysed reaction is Fe(III)-heme b-[protein] + nitric oxide + H2O = Fe(II)-heme b-[protein] + nitrite + 2 H(+). It catalyses the reaction H2O2 + AH2 = A + 2 H2O. Functionally, monomeric heme protein which primary function is to store oxygen and facilitate its diffusion within muscle tissues. Reversibly binds oxygen through a pentacoordinated heme iron and enables its timely and efficient release as needed during periods of heightened demand. Depending on the oxidative conditions of tissues and cells, and in addition to its ability to bind oxygen, it also has a nitrite reductase activity whereby it regulates the production of bioactive nitric oxide. Under stress conditions, like hypoxia and anoxia, it also protects cells against reactive oxygen species thanks to its pseudoperoxidase activity. The sequence is that of Myoglobin (MB) from Anas poecilorhyncha (Indian spot-billed duck).